The chain runs to 237 residues: Zinc finger protein 22 (237 aa).

The segment at Met-1 to Trp-33 is disordered. Lys-18 and Lys-23 each carry N6-acetyllysine. C2H2-type zinc fingers lie at residues Tyr-55–Ser-82, His-83–Pro-110, Tyr-111–Pro-138, Tyr-139–Pro-166, and Tyr-167–Ser-194. Basic residues predominate over residues Val-188 to Lys-217. Positions Val-188 to Ala-218 are disordered.

The protein belongs to the krueppel C2H2-type zinc-finger protein family. In terms of tissue distribution, highly expressed in the ameloblast layer of mandibular incisors, moderately expressed in submandibular gland, calvaria, kidney and lung, and expressed at low levels in brain and thymus.

Its subcellular location is the nucleus. Functionally, binds DNA through the consensus sequence 5'-CAATG-3'. May be involved in transcriptional regulation and may play a role in tooth formation. In Rattus norvegicus (Rat), this protein is Zinc finger protein 22 (Znf22).